The following is a 323-amino-acid chain: MASIWVGHRGTVRDYPDFSPSVDAEAIQKAIRGIGTDEKMLISILTERSNAQRQLIVKEYQAAYGKELKDDLKGDLSGHFEHLMVALVTPPAVFDAKQLKKSMKGAGTNEDALIEILTTRTSRQMKDISQAYYTVYKKSLGDDISSETSGDFRKALLTLADGRRDESLKVDEHLAKQDAQILYKAGENRWGTDEDKFTEILCLRSFPQLKLTFDEYRNISQKDIVDSIKGELSGHFEDLLLAIVNCVRNTPAFLAERLHRALKGIGTDEFTLNRIMVSRSEIDLLDIRTEFKKHYGYSLYSAIKSDTSGDYEITLLKICGGDD.

A2 carries the N-acetylalanine modification. Annexin repeat units follow at residues 18–89 (FSPS…ALVT), 90–161 (PPAV…TLAD), 173–245 (HLAK…AIVN), and 249–320 (NTPA…KICG). The residue at position 267 (T267) is a Phosphothreonine.

Belongs to the annexin family.

In terms of biological role, inhibitor of phospholipase A2, also possesses anti-coagulant properties. Also cleaves the cyclic bond of inositol 1,2-cyclic phosphate to form inositol 1-phosphate. In Homo sapiens (Human), this protein is Annexin A3 (ANXA3).